A 384-amino-acid polypeptide reads, in one-letter code: 1-deoxy-D-xylulose 5-phosphate reductoisomerase (384 aa).

Residues Thr-10, Gly-11, Ser-12, Ile-13, Gly-36, Lys-37, Asn-38, and Asn-121 each contribute to the NADPH site. Residue Lys-122 coordinates 1-deoxy-D-xylulose 5-phosphate. Glu-123 contributes to the NADPH binding site. Residue Asp-147 coordinates Mn(2+). Positions 148, 149, 173, and 196 each coordinate 1-deoxy-D-xylulose 5-phosphate. Residue Glu-149 participates in Mn(2+) binding. Gly-202 contributes to the NADPH binding site. The 1-deoxy-D-xylulose 5-phosphate site is built by Ser-209, Asn-214, Lys-215, and Glu-218. Residue Glu-218 coordinates Mn(2+).

This sequence belongs to the DXR family. Mg(2+) is required as a cofactor. It depends on Mn(2+) as a cofactor.

The enzyme catalyses 2-C-methyl-D-erythritol 4-phosphate + NADP(+) = 1-deoxy-D-xylulose 5-phosphate + NADPH + H(+). It functions in the pathway isoprenoid biosynthesis; isopentenyl diphosphate biosynthesis via DXP pathway; isopentenyl diphosphate from 1-deoxy-D-xylulose 5-phosphate: step 1/6. In terms of biological role, catalyzes the NADPH-dependent rearrangement and reduction of 1-deoxy-D-xylulose-5-phosphate (DXP) to 2-C-methyl-D-erythritol 4-phosphate (MEP). In Exiguobacterium sibiricum (strain DSM 17290 / CCUG 55495 / CIP 109462 / JCM 13490 / 255-15), this protein is 1-deoxy-D-xylulose 5-phosphate reductoisomerase.